Consider the following 545-residue polypeptide: Phenylalanine--tRNA ligase beta subunit (545 aa).

One can recognise a B5 domain in the interval 266 to 342; it reads LSPALRNINV…IGAGFGNLEA (77 aa). Residues D320, D326, E329, and D330 each coordinate Mg(2+).

It belongs to the phenylalanyl-tRNA synthetase beta subunit family. Type 2 subfamily. Tetramer of two alpha and two beta subunits. It depends on Mg(2+) as a cofactor.

The protein resides in the cytoplasm. It catalyses the reaction tRNA(Phe) + L-phenylalanine + ATP = L-phenylalanyl-tRNA(Phe) + AMP + diphosphate + H(+). The sequence is that of Phenylalanine--tRNA ligase beta subunit from Methanospirillum hungatei JF-1 (strain ATCC 27890 / DSM 864 / NBRC 100397 / JF-1).